A 131-amino-acid polypeptide reads, in one-letter code: Small ribosomal subunit protein uS11 (131 aa).

Belongs to the universal ribosomal protein uS11 family. In terms of assembly, part of the 30S ribosomal subunit. Interacts with proteins S7 and S18. Binds to IF-3.

In terms of biological role, located on the platform of the 30S subunit, it bridges several disparate RNA helices of the 16S rRNA. Forms part of the Shine-Dalgarno cleft in the 70S ribosome. This is Small ribosomal subunit protein uS11 from Bacillus pumilus (strain SAFR-032).